The chain runs to 51 residues: Defensin-like protein 2A (51 aa).

Pyrrolidone carboxylic acid is present on Gln1. Intrachain disulfides connect Cys4-Cys51, Cys15-Cys36, Cys21-Cys45, and Cys25-Cys47. Ser8 bears the Phosphoserine; by CPK mark.

As to quaternary structure, forms oligomers in its native state.

Possesses antifungal activity sensitive to inorganic cations. In Sinapis alba (White mustard), this protein is Defensin-like protein 2A.